A 171-amino-acid polypeptide reads, in one-letter code: S-ribosylhomocysteine lyase (171 aa).

Residues H54, H58, and C128 each contribute to the Fe cation site.

The protein belongs to the LuxS family. In terms of assembly, homodimer. It depends on Fe cation as a cofactor.

It catalyses the reaction S-(5-deoxy-D-ribos-5-yl)-L-homocysteine = (S)-4,5-dihydroxypentane-2,3-dione + L-homocysteine. Involved in the synthesis of autoinducer 2 (AI-2) which is secreted by bacteria and is used to communicate both the cell density and the metabolic potential of the environment. The regulation of gene expression in response to changes in cell density is called quorum sensing. Catalyzes the transformation of S-ribosylhomocysteine (RHC) to homocysteine (HC) and 4,5-dihydroxy-2,3-pentadione (DPD). In Pectobacterium atrosepticum (strain SCRI 1043 / ATCC BAA-672) (Erwinia carotovora subsp. atroseptica), this protein is S-ribosylhomocysteine lyase.